The following is a 297-amino-acid chain: Putative phosphate permease MJ0630 (297 aa).

9 helical membrane-spanning segments follow: residues 2-22, 45-65, 67-87, 99-119, 121-141, 154-174, 180-200, 225-245, and 274-294; these read ITIE…LFIL, LLIL…NVGS, VNSL…VMTL, TVII…YVFG, ILLS…ILYS, ITMI…NLGS, VLGT…FLCL, FIAQ…GMPV, and NIIF…FIIN.

The protein belongs to the inorganic phosphate transporter (PiT) (TC 2.A.20) family.

It localises to the cell membrane. In terms of biological role, potential transporter for phosphate. The chain is Putative phosphate permease MJ0630 from Methanocaldococcus jannaschii (strain ATCC 43067 / DSM 2661 / JAL-1 / JCM 10045 / NBRC 100440) (Methanococcus jannaschii).